A 308-amino-acid chain; its full sequence is uncharacterized protein (308 aa).

Residues 5-236 form the ABC transporter domain; it reads LELQQLKKTY…LKSETFILDL (232 aa). ATP is bound at residue 38–45; that stretch reads GPNGAGKS.

Belongs to the ABC transporter superfamily.

This is an uncharacterized protein from Escherichia coli (strain K12).